A 341-amino-acid polypeptide reads, in one-letter code: Anthranilate phosphoribosyltransferase (341 aa).

Residues glycine 80, 83–84 (GD), threonine 88, 90–93 (NIST), 108–116 (KHGNYSVSS), and serine 120 contribute to the 5-phospho-alpha-D-ribose 1-diphosphate site. Glycine 80 contributes to the anthranilate binding site. A Mg(2+)-binding site is contributed by serine 92. An anthranilate-binding site is contributed by asparagine 111. Arginine 166 is an anthranilate binding site. Residues aspartate 224 and glutamate 225 each coordinate Mg(2+).

It belongs to the anthranilate phosphoribosyltransferase family. Homodimer. It depends on Mg(2+) as a cofactor.

It catalyses the reaction N-(5-phospho-beta-D-ribosyl)anthranilate + diphosphate = 5-phospho-alpha-D-ribose 1-diphosphate + anthranilate. Its pathway is amino-acid biosynthesis; L-tryptophan biosynthesis; L-tryptophan from chorismate: step 2/5. In terms of biological role, catalyzes the transfer of the phosphoribosyl group of 5-phosphorylribose-1-pyrophosphate (PRPP) to anthranilate to yield N-(5'-phosphoribosyl)-anthranilate (PRA). This Haloquadratum walsbyi (strain DSM 16790 / HBSQ001) protein is Anthranilate phosphoribosyltransferase.